A 259-amino-acid polypeptide reads, in one-letter code: Probable transcriptional regulatory protein Noca_2383 (259 aa).

This sequence belongs to the TACO1 family.

It is found in the cytoplasm. This Nocardioides sp. (strain ATCC BAA-499 / JS614) protein is Probable transcriptional regulatory protein Noca_2383.